A 456-amino-acid polypeptide reads, in one-letter code: UDP-N-acetylmuramate--L-alanine ligase (456 aa).

118–124 (GTHGKST) contributes to the ATP binding site.

Belongs to the MurCDEF family.

It localises to the cytoplasm. It carries out the reaction UDP-N-acetyl-alpha-D-muramate + L-alanine + ATP = UDP-N-acetyl-alpha-D-muramoyl-L-alanine + ADP + phosphate + H(+). Its pathway is cell wall biogenesis; peptidoglycan biosynthesis. In terms of biological role, cell wall formation. In Paenarthrobacter aurescens (strain TC1), this protein is UDP-N-acetylmuramate--L-alanine ligase.